The primary structure comprises 160 residues: Endoribonuclease YbeY (160 aa).

Positions 123, 127, and 133 each coordinate Zn(2+).

Belongs to the endoribonuclease YbeY family. It depends on Zn(2+) as a cofactor.

It localises to the cytoplasm. Its function is as follows. Single strand-specific metallo-endoribonuclease involved in late-stage 70S ribosome quality control and in maturation of the 3' terminus of the 16S rRNA. The chain is Endoribonuclease YbeY from Roseiflexus sp. (strain RS-1).